The sequence spans 246 residues: Probable transcriptional regulatory protein ACP_0521 (246 aa).

Belongs to the TACO1 family.

The protein resides in the cytoplasm. The sequence is that of Probable transcriptional regulatory protein ACP_0521 from Acidobacterium capsulatum (strain ATCC 51196 / DSM 11244 / BCRC 80197 / JCM 7670 / NBRC 15755 / NCIMB 13165 / 161).